Reading from the N-terminus, the 451-residue chain is Trigger factor (451 aa).

The region spanning 165-250 is the PPIase FKBP-type domain; it reads DDKLTIDFEG…LHQIQAREAL (86 aa).

The protein belongs to the FKBP-type PPIase family. Tig subfamily.

It is found in the cytoplasm. The catalysed reaction is [protein]-peptidylproline (omega=180) = [protein]-peptidylproline (omega=0). In terms of biological role, involved in protein export. Acts as a chaperone by maintaining the newly synthesized protein in an open conformation. Functions as a peptidyl-prolyl cis-trans isomerase. In Helicobacter pylori (strain HPAG1), this protein is Trigger factor.